The following is a 359-amino-acid chain: uncharacterized protein (359 aa).

This is an uncharacterized protein from Treponema pallidum (strain Nichols).